The sequence spans 227 residues: 2-heptyl-1-hydroxyquinolin-4(1H)-one methyltransferase (227 aa).

It belongs to the methyltransferase superfamily. As to quaternary structure, monomer.

The protein localises to the cytoplasm. The enzyme catalyses 2-heptyl-1-hydroxy-4(1H)-quinolinone + S-adenosyl-L-methionine = 2-heptyl-1-methoxy-4(1H)-quinolinone + S-adenosyl-L-homocysteine + H(+). The catalysed reaction is 3-bromo-2-heptyl-1-hydroxy-4(1H)-quinolinone + S-adenosyl-L-methionine = 3-bromo-2-heptyl-1-methoxy-4(1H)-quinolinone + S-adenosyl-L-homocysteine + H(+). In terms of biological role, involved in cellular response to chemical stress and may contribute to resistance toward antimicrobial natural compounds as well as drugs. Catalyzes the methylation and detoxification of the P.aeruginosa toxin 2-heptyl-1-hydroxy-4(1H)-quinolinone (HQNO) to 2-heptyl-1-methoxy-4(1H)-quinolinone (HMOQ). Can also methylate 3-bromo-2-heptyl-1-hydroxy-4(1H)-quinolinone, and shows much lower activity with 1-hydroxyquinolin-4(1H)-one, quercetin, 4-hydroxyquinolin-2(1H)-one (DHQ) and 4-hydroxyisoquinolin-1(2H)-one. The polypeptide is 2-heptyl-1-hydroxyquinolin-4(1H)-one methyltransferase (Mycobacteroides abscessus (strain ATCC 19977 / DSM 44196 / CCUG 20993 / CIP 104536 / JCM 13569 / NCTC 13031 / TMC 1543 / L948) (Mycobacterium abscessus)).